Reading from the N-terminus, the 525-residue chain is Phosphoenolpyruvate carboxykinase (ATP) (525 aa).

The substrate site is built by Arg54, Tyr190, and Lys196. Residues Lys196, His215, and 231–239 contribute to the ATP site; that span reads GLSGTGKTT. Mn(2+) contacts are provided by Lys196 and His215. Asp252 is a binding site for Mn(2+). Positions 280, 316, and 441 each coordinate ATP. Arg316 serves as a coordination point for substrate.

It belongs to the phosphoenolpyruvate carboxykinase (ATP) family. It depends on Mn(2+) as a cofactor.

The protein localises to the cytoplasm. It carries out the reaction oxaloacetate + ATP = phosphoenolpyruvate + ADP + CO2. It functions in the pathway carbohydrate biosynthesis; gluconeogenesis. Functionally, involved in the gluconeogenesis. Catalyzes the conversion of oxaloacetate (OAA) to phosphoenolpyruvate (PEP) through direct phosphoryl transfer between the nucleoside triphosphate and OAA. The chain is Phosphoenolpyruvate carboxykinase (ATP) from Nitratiruptor sp. (strain SB155-2).